Consider the following 511-residue polypeptide: Inositol-3-phosphate synthase isozyme 1 (511 aa).

Positions 71, 72, 73, 74, 144, 181, 191, 194, 231, 232, 233, 234, 282, 283, 307, 310, 341, 342, 343, 356, 394, 395, 423, and 424 each coordinate NAD(+).

Belongs to the myo-inositol 1-phosphate synthase family. Homotrimer or homotetramer. Interacts with ATXR5 and ATXR6. The cofactor is NAD(+). As to expression, expressed in siliques, leaves, roots, seed endosperm, but not in embryos. Highest expression in leaves, but restricted to vascular tissue in older leaves.

It is found in the cytoplasm. The protein localises to the cytosol. The protein resides in the nucleus. It carries out the reaction D-glucose 6-phosphate = 1D-myo-inositol 3-phosphate. The protein operates within polyol metabolism; myo-inositol biosynthesis; myo-inositol from D-glucose 6-phosphate: step 1/2. In terms of biological role, key enzyme in myo-inositol biosynthesis pathway that catalyzes the conversion of glucose 6-phosphate to 1-myo-inositol 1-phosphate in a NAD-dependent manner. Catalyzes the majority of myo-inositol synthesis required for plant growth and development. Acts as a repressor of programmed cell death and protects plant cells against cell death under high light intensity or long days. Controls its own transcription by inhibiting ATXR6 activity. Reduces the deposition of inhibitory histone marks on its own promoter. The protein is Inositol-3-phosphate synthase isozyme 1 (IPS1) of Arabidopsis thaliana (Mouse-ear cress).